A 124-amino-acid polypeptide reads, in one-letter code: Small ribosomal subunit protein uS12 (124 aa).

Asp-89 is modified (3-methylthioaspartic acid).

The protein belongs to the universal ribosomal protein uS12 family. As to quaternary structure, part of the 30S ribosomal subunit. Contacts proteins S8 and S17. May interact with IF1 in the 30S initiation complex.

Functionally, with S4 and S5 plays an important role in translational accuracy. In terms of biological role, interacts with and stabilizes bases of the 16S rRNA that are involved in tRNA selection in the A site and with the mRNA backbone. Located at the interface of the 30S and 50S subunits, it traverses the body of the 30S subunit contacting proteins on the other side and probably holding the rRNA structure together. The combined cluster of proteins S8, S12 and S17 appears to hold together the shoulder and platform of the 30S subunit. This Sodalis glossinidius (strain morsitans) protein is Small ribosomal subunit protein uS12.